Reading from the N-terminus, the 411-residue chain is 6-hydroxytryprostatin B O-methyltransferase (411 aa).

Asp-270 is an S-adenosyl-L-methionine binding site. The active-site Proton acceptor is His-313.

It belongs to the class I-like SAM-binding methyltransferase superfamily. Cation-independent O-methyltransferase family. As to quaternary structure, homodimer.

The enzyme catalyses 6-hydroxytryprostatin B + S-adenosyl-L-methionine = tryprostatin A + S-adenosyl-L-homocysteine + H(+). It participates in alkaloid biosynthesis. In terms of biological role, 6-hydroxytryprostatin B O-methyltransferase; part of the gene cluster that mediates the biosynthesis of fumitremorgins, indole alkaloids that carry not only intriguing chemical structures, but also interesting biological and pharmacological activities. The biosynthesis of fumitremorgin-type alkaloids begins by condensation of the two amino acids L-tryptophan and L-proline to brevianamide F, catalyzed by the non-ribosomal peptide synthetase ftmPS/ftmA. Brevianamide F is then prenylated by the prenyltransferase ftmPT1/ftmB in the presence of dimethylallyl diphosphate, resulting in the formation of tryprostatin B. The three cytochrome P450 monooxygenases, ftmP450-1/ftmC, ftmP450-2/ftmE and ftmP450-3/FtmG, are responsible for the conversion of tryprostatin B to 6-hydroxytryprostatin B, tryprostatin A to fumitremorgin C and fumitremorgin C to 12,13-dihydroxyfumitremorgin C, respectively. The putative methyltransferase ftmMT/ftmD is expected for the conversion of 6-hydroxytryprostatin B to tryprostatin A. FtmPT2/FtmH catalyzes the prenylation of 12,13-dihydroxyfumitre-morgin C in the presence of dimethylallyl diphosphate, resulting in the formation of fumitremorgin B. Fumitremorgin B is further converted to verruculogen by ftmOx1/ftmF via the insertion of an endoperoxide bond between the two prenyl moieties. Finally, verruculogen is further converted to fumitremorgin A by the verruculogen prenyltransferase ftmPT3. This Neosartorya fischeri (strain ATCC 1020 / DSM 3700 / CBS 544.65 / FGSC A1164 / JCM 1740 / NRRL 181 / WB 181) (Aspergillus fischerianus) protein is 6-hydroxytryprostatin B O-methyltransferase.